Here is a 75-residue protein sequence, read N- to C-terminus: Antimicrobial peptide Meucin-49-1 (75 aa).

Residues Met-1–Ser-22 form the signal peptide.

The protein belongs to the non-disulfide-bridged peptide (NDBP) superfamily. Long chain multifunctional peptide (group 2) family. As to expression, expressed by the venom gland.

It is found in the secreted. Functionally, antimicrobial peptide. This is Antimicrobial peptide Meucin-49-1 from Mesobuthus eupeus (Lesser Asian scorpion).